The chain runs to 576 residues: Probable vesicular glutamate transporter eat-4 (576 aa).

The Cytoplasmic segment spans residues 1-69 (MSSWNEAWDR…QTWIGKCRKR (69 aa)). The interval 25-46 (AAASATGAAPPQQMQEEGNENP) is disordered. The segment covering 36–46 (QQMQEEGNENP) has biased composition (polar residues). The chain crosses the membrane as a helical span at residues 70-90 (WLLAILANMGFMISFGIRCNF). Over 91-121 (GAAKTHMYKNYTDPYGKVHMHEFNWTIDELS) the chain is Extracellular. N-linked (GlcNAc...) asparagine glycans are attached at residues Asn-100 and Asn-114. A helical membrane pass occupies residues 122–142 (VMESSYFYGYLVTQIPAGFLA). Residues 143–150 (AKFPPNKL) lie on the Cytoplasmic side of the membrane. A helical transmembrane segment spans residues 151–171 (FGFGIGVGAFLNILLPYGFKV). The Extracellular segment spans residues 172–174 (KSD). The helical transmembrane segment at 175-195 (YLVAFIQITQGLVQGVCYPAM) threads the bilayer. Residues 196 to 213 (HGVWRYWAPPMERSKLAT) lie on the Cytoplasmic side of the membrane. The chain crosses the membrane as a helical span at residues 214–234 (TAFTGSYAGAVLGLPLSAFLV). Over 235 to 239 (SYVSW) the chain is Extracellular. A helical transmembrane segment spans residues 240–260 (AAPFYLYGVCGVIWAILWFCV). Residues 261 to 305 (TFEKPAFHPTISQEEKIFIEDAIGHVSNTHPTIRSIPWKAIVTSK) are Cytoplasmic-facing. Residues 306–325 (PVWAIIVANFARSWTFYLLL) traverse the membrane as a helical segment. The Extracellular segment spans residues 326 to 344 (QNQLTYMKEALGMKIADSG). A helical membrane pass occupies residues 345–365 (LLAAIPHLVMGCVVLMGGQLA). At 366-381 (DYLRSNKILSTTAVRK) the chain is on the cytoplasmic side. A helical membrane pass occupies residues 382 to 402 (IFNCGGFGGEAAFMLIVAYTT). Residues 403–406 (SDTT) lie on the Extracellular side of the membrane. The helical transmembrane segment at 407 to 427 (AIMALIAAVGMSGFAISGFNV) threads the bilayer. The Cytoplasmic segment spans residues 428–437 (NHLDIAPRYA). Residues 438–458 (AILMGFSNGIGTLAGLTCPFV) form a helical membrane-spanning segment. Residues 459–471 (TEAFTAHSKHGWT) lie on the Extracellular side of the membrane. The chain crosses the membrane as a helical span at residues 472–492 (SVFLLASLIHFTGVTFYAVYA). At 493–576 (SGELQEWAEP…VVENPHYQQW (84 aa)) the chain is on the cytoplasmic side.

This sequence belongs to the major facilitator superfamily. Sodium/anion cotransporter family. VGLUT subfamily. As to expression, expressed in neurons of the pharynx and the extrapharyngeal nervous system. Highly expressed in male PHC sensory neurons.

It is found in the cell membrane. The protein localises to the synapse. Functionally, required for glutamatergic synaptic transmission. In AWB and AWC sensory neurons, required for the detection of preferred food sources, probably via glutamatergic neurotransmission from sensory neurons. Negatively regulates the turning step of male mating behavior. This Caenorhabditis elegans protein is Probable vesicular glutamate transporter eat-4.